A 433-amino-acid polypeptide reads, in one-letter code: MLELIEVNGTPGSQLSTPRSGKSPSPSPTSPGSLRKQRISQHGGSSTSLSSTKVCSSMDENDGPGEEESDEGFQIPATITERYKVGRTIGDGNFAVVKECIERSTAREYALKIIKKSKCRGKEHMIQNEVSILRRVKHPNIVLLIEEMDVPTELYLVMELVKGGDLFDAITSTSKYTERDASGMLYNLASAIKYLHSLNIVHRDIKPENLLVYEHQDGSKSLKLGDFGLATIVDGPLYTVCGTPTYVAPEIIAETGYGLKVDIWAAGVITYILLCGFPPFRGSGDDQEVLFDQILMGQVDFPSPYWDNVSDSAKELINMMLLVNVDQRFSAVQVLEHPWVNDDGLPENEHQLSVAGKIKKHFNTGPKPSSTAAGVSVIATTALDKERQVFRRRRNQDVRGRYKAQPAPPELNSESEDYSPSSSETVRSPNSPF.

The disordered stretch occupies residues 1 to 74; that stretch reads MLELIEVNGT…GEEESDEGFQ (74 aa). A phosphoserine mark is found at S23, S25, S27, S30, S40, S45, S46, S48, S57, and S69. Over residues 40–57 the composition is skewed to low complexity; sequence SQHGGSSTSLSSTKVCSS. Positions 59-71 are enriched in acidic residues; sequence DENDGPGEEESDE. Positions 83–340 constitute a Protein kinase domain; it reads YKVGRTIGDG…AVQVLEHPWV (258 aa). Residues 89–97 and K112 contribute to the ATP site; that span reads IGDGNFAVV. D204 serves as the catalytic Proton acceptor. Y213 is subject to Phosphotyrosine. Residues 388-400 are compositionally biased toward basic and acidic residues; it reads QVFRRRRNQDVRG. Positions 388-433 are disordered; it reads QVFRRRRNQDVRGRYKAQPAPPELNSESEDYSPSSSETVRSPNSPF. Phosphoserine is present on residues S419, S428, and S431.

It belongs to the protein kinase superfamily. CAMK Ser/Thr protein kinase family. CaMK subfamily.

The catalysed reaction is L-seryl-[protein] + ATP = O-phospho-L-seryl-[protein] + ADP + H(+). It catalyses the reaction L-threonyl-[protein] + ATP = O-phospho-L-threonyl-[protein] + ADP + H(+). In terms of biological role, probable kinase that may be involved in a calcium-signaling pathway controlling neuronal migration in the developing brain. May also participate in functions of the mature nervous system. The sequence is that of Serine/threonine-protein kinase DCLK1 (Dclk1) from Rattus norvegicus (Rat).